The primary structure comprises 125 residues: Fluoride-specific ion channel FluC (125 aa).

The next 4 membrane-spanning stretches (helical) occupy residues 4–24 (VIYVALGGAVGSVLRYWVGIV), 32–52 (FLPWGTFSVNLIGSFCIGLFA), 68–88 (LLITGLLGGFTTFSAFMLDTV), and 100–120 (AFYVAASIGFGVGAVFAGLAV). Residues Gly75 and Thr78 each contribute to the Na(+) site.

This sequence belongs to the fluoride channel Fluc/FEX (TC 1.A.43) family.

It localises to the cell inner membrane. The catalysed reaction is fluoride(in) = fluoride(out). Na(+) is not transported, but it plays an essential structural role and its presence is essential for fluoride channel function. Fluoride-specific ion channel. Important for reducing fluoride concentration in the cell, thus reducing its toxicity. This Allorhizobium ampelinum (strain ATCC BAA-846 / DSM 112012 / S4) (Agrobacterium vitis (strain S4)) protein is Fluoride-specific ion channel FluC.